The sequence spans 753 residues: MSAADLDYFSEDEQREIEAELDTGFKDIEEKYAVTAQKGFETMLVVDNIPIVDGSKKQRLLERLRQTFAKVGAPIEEESIDMPWNAAAGTNKGFVFLTYPDVKEAENAVHTLDGVSFGKNVLHVNRFGDIQRFASMPVGEGDLPSGWKEKEYIEKDYLRNWLGDIAGRDQYVTFWETEVTVWWNGRNGTAEALKGPDGKPVKNSKWGELYLQWSTMGTYLASLHRVGVALWSGPKLDGPIGVNVLRFTHPNVRLIQFSPCENYLVTWSEDPLPNYENHPNAALRDTFGPEDEGNQYVIWDIKTTRVLRTFPGDKSAIGVDDTQSRMSWPTFKWSADDSYIAKCNVGAGISVYELPTMGLLDRKSIKIEGVQDFEWCPMSQKDLIARQEGKGKECVLAFWTPEAQNQPARVNIMAVPSRTILRSKNLFNVSECKFYWQSQGDFLCVKVDRHARKAKSKKATSCNLEIFRMREKDYPVEVLEFKDYVPQFAWEPSGTRFAIVLQAETNLPSVSGASTKYSIDFYQLDSKKGDFIAIKHLDSKMANTLVWSPKGRHIALATIGSSSKYDIEFWDLDFTIDERREAAELGANVTMLGTGEHYGITEIAWDPSGRYIATSASTWRQSPEPGFSIWDFKGQQLLHESRDRFKQFLWRPRPPTLLSKDQIKKVRKELREYSRQFDEEDAAEENRGSAEKLAQRRREIGEWNAWRTRNNDRLAFERENRGKSKAKIDVKGQEARVEEWVEELIDETEELSM.

An RRM domain is found at 42-129; it reads TMLVVDNIPI…NVLHVNRFGD (88 aa). 5 WD repeats span residues 142–185, 203–241, 321–362, 537–580, and 595–640; these read DLPS…WWNG, NSKWGELYLQWSTMGTYLASLHRVGVALWSGPKLDGPIG, DTQS…LLDR, LDSK…DERR, and GEHY…LLHE. Residues 723–753 adopt a coiled-coil conformation; that stretch reads KSKAKIDVKGQEARVEEWVEELIDETEELSM.

Belongs to the eIF-3 subunit B family. As to quaternary structure, component of the eukaryotic translation initiation factor 3 (eIF-3) complex.

The protein resides in the cytoplasm. Functionally, RNA-binding component of the eukaryotic translation initiation factor 3 (eIF-3) complex, which is involved in protein synthesis of a specialized repertoire of mRNAs and, together with other initiation factors, stimulates binding of mRNA and methionyl-tRNAi to the 40S ribosome. The eIF-3 complex specifically targets and initiates translation of a subset of mRNAs involved in cell proliferation. This Cryptococcus neoformans var. neoformans serotype D (strain B-3501A) (Filobasidiella neoformans) protein is Eukaryotic translation initiation factor 3 subunit B.